The following is a 498-amino-acid chain: MEFSVKNGSVEKQRTGCLVVGVYEPRRLSPAAEQLDKLSDGYLSNLLRKGDLEGRVGQTLLLHNVPNVPADRVLLVGCGKERELTERQYKQTIQKMVQVINDTGSTEAICFLTELHVKARSVYWNIRFAIEAIQENGYQYNEFKSVKPEIRRELRKIVFNIANRKDLTVSEQAVEQGKAVALGVIAAKNVANCPPNVCNPKYLSGLAKGLAKEYDNITTTVLDEKEMAALQMNAYLAVSRGSENDAYLSIIEYKGSPNPAAKPIVLVGKGLTFDTGGISIKPSDAMDEMKYDMGGAASVYGTMKAIAEMKLPLNVIGVLAGCENMPDGNAYRPGDILTTMSGLTVEVLNTDAEGRLVLCDTLTYVERFDPELVIDVATLTGACMIALGNHNSGLISPNNTLANDLLNAAEQADDKAWRLPMGEEYQEQLKSNFADLANIGGRLGGAITAGVFLSNFTKKYTWAHLDIAGTAWKSGAAKGATGRPVPLLSQFLINKAGV.

Positions 269 and 274 each coordinate Mn(2+). Lys281 is a catalytic residue. Mn(2+) is bound by residues Asp292, Asp351, and Glu353. Residue Arg355 is part of the active site.

Belongs to the peptidase M17 family. Mn(2+) serves as cofactor.

It localises to the cytoplasm. It carries out the reaction Release of an N-terminal amino acid, Xaa-|-Yaa-, in which Xaa is preferably Leu, but may be other amino acids including Pro although not Arg or Lys, and Yaa may be Pro. Amino acid amides and methyl esters are also readily hydrolyzed, but rates on arylamides are exceedingly low.. It catalyses the reaction Release of an N-terminal amino acid, preferentially leucine, but not glutamic or aspartic acids.. In terms of biological role, presumably involved in the processing and regular turnover of intracellular proteins. Catalyzes the removal of unsubstituted N-terminal amino acids from various peptides. The polypeptide is Probable cytosol aminopeptidase (Glaesserella parasuis serovar 5 (strain SH0165) (Haemophilus parasuis)).